Consider the following 70-residue polypeptide: DNA-directed RNA polymerase subunit omega (70 aa).

It belongs to the RNA polymerase subunit omega family. The RNAP catalytic core consists of 2 alpha, 1 beta, 1 beta' and 1 omega subunit. When a sigma factor is associated with the core the holoenzyme is formed, which can initiate transcription.

The enzyme catalyses RNA(n) + a ribonucleoside 5'-triphosphate = RNA(n+1) + diphosphate. Its function is as follows. Promotes RNA polymerase assembly. Latches the N- and C-terminal regions of the beta' subunit thereby facilitating its interaction with the beta and alpha subunits. The protein is DNA-directed RNA polymerase subunit omega of Staphylococcus haemolyticus (strain JCSC1435).